Here is a 202-residue protein sequence, read N- to C-terminus: uncharacterized protein (202 aa).

This is an uncharacterized protein from Bacillus anthracis.